The following is a 316-amino-acid chain: Small ribosomal subunit protein RACK1 (316 aa).

7 WD repeats span residues 4–46 (QMTL…WRLT), 52–93 (YGVP…WDLS), 94–135 (TGQT…WNTL), 137–180 (VCKY…WNLT), 181–221 (NCKL…LWDL), 222–263 (NEGK…WDLE), and 264–312 (GKVV…WQVS).

Belongs to the WD repeat G protein beta family. Ribosomal protein RACK1 subfamily.

The sequence is that of Small ribosomal subunit protein RACK1 from Biomphalaria glabrata (Bloodfluke planorb).